Consider the following 579-residue polypeptide: Chromosomal replication initiator protein DnaA (579 aa).

The interval methionine 1–threonine 71 is domain I, interacts with DnaA modulators. The tract at residues threonine 71–serine 242 is domain II. Disordered regions lie at residues alanine 131–histidine 196 and glutamate 212–glutamate 240. Positions serine 171–alanine 183 are enriched in low complexity. Residues arginine 243–serine 459 are domain III, AAA+ region. Glycine 287, glycine 289, lysine 290, and threonine 291 together coordinate ATP. The interval asparagine 460–glycine 579 is domain IV, binds dsDNA.

This sequence belongs to the DnaA family. Oligomerizes as a right-handed, spiral filament on DNA at oriC.

The protein localises to the cytoplasm. Its function is as follows. Plays an essential role in the initiation and regulation of chromosomal replication. ATP-DnaA binds to the origin of replication (oriC) to initiate formation of the DNA replication initiation complex once per cell cycle. Binds the DnaA box (a 9 base pair repeat at the origin) and separates the double-stranded (ds)DNA. Forms a right-handed helical filament on oriC DNA; dsDNA binds to the exterior of the filament while single-stranded (ss)DNA is stabiized in the filament's interior. The ATP-DnaA-oriC complex binds and stabilizes one strand of the AT-rich DNA unwinding element (DUE), permitting loading of DNA polymerase. After initiation quickly degrades to an ADP-DnaA complex that is not apt for DNA replication. Binds acidic phospholipids. In Cupriavidus metallidurans (strain ATCC 43123 / DSM 2839 / NBRC 102507 / CH34) (Ralstonia metallidurans), this protein is Chromosomal replication initiator protein DnaA.